Here is a 121-residue protein sequence, read N- to C-terminus: MWSRRGLGVSRAPLHLLLGVWGPSGRTGGQRKGASLARPGRGGLASCSVGANGKRDVLFLRKTLTNTVEDIQIDNFRRKSDLGVGSPDWKNLLIDVTREDHENSQNNSKRRCKVNCETDQR.

2 disordered regions span residues 24-43 (SGRT…GRGG) and 100-121 (DHEN…TDQR).

This is an uncharacterized protein from Homo sapiens (Human).